Consider the following 526-residue polypeptide: ATP synthase subunit alpha (526 aa).

178-185 (GDRQTGKT) contacts ATP.

It belongs to the ATPase alpha/beta chains family. As to quaternary structure, F-type ATPases have 2 components, CF(1) - the catalytic core - and CF(0) - the membrane proton channel. CF(1) has five subunits: alpha(3), beta(3), gamma(1), delta(1), epsilon(1). CF(0) has four main subunits: a(1), b(1), b'(1) and c(9-12).

Its subcellular location is the cell membrane. The enzyme catalyses ATP + H2O + 4 H(+)(in) = ADP + phosphate + 5 H(+)(out). In terms of biological role, produces ATP from ADP in the presence of a proton gradient across the membrane. The alpha chain is a regulatory subunit. The sequence is that of ATP synthase subunit alpha from Roseiflexus castenholzii (strain DSM 13941 / HLO8).